The sequence spans 272 residues: HMP-PP phosphatase (272 aa).

The active-site Nucleophile is Asp-8. Mg(2+) is bound by residues Asp-8, Asp-10, and Asp-212.

It belongs to the HAD-like hydrolase superfamily. Cof family. Mg(2+) is required as a cofactor.

The catalysed reaction is 4-amino-2-methyl-5-(diphosphooxymethyl)pyrimidine + H2O = 4-amino-2-methyl-5-(phosphooxymethyl)pyrimidine + phosphate + H(+). Its function is as follows. Catalyzes the hydrolysis of 4-amino-2-methyl-5-hydroxymethylpyrimidine pyrophosphate (HMP-PP) to 4-amino-2-methyl-5-hydroxymethylpyrimidine phosphate (HMP-P). This Escherichia coli O81 (strain ED1a) protein is HMP-PP phosphatase.